Consider the following 217-residue polypeptide: Methylthioribulose-1-phosphate dehydratase (217 aa).

Zn(2+) is bound by residues His-106 and His-108.

Belongs to the aldolase class II family. MtnB subfamily. It depends on Zn(2+) as a cofactor.

It carries out the reaction 5-(methylsulfanyl)-D-ribulose 1-phosphate = 5-methylsulfanyl-2,3-dioxopentyl phosphate + H2O. It participates in amino-acid biosynthesis; L-methionine biosynthesis via salvage pathway; L-methionine from S-methyl-5-thio-alpha-D-ribose 1-phosphate: step 2/6. Its function is as follows. Catalyzes the dehydration of methylthioribulose-1-phosphate (MTRu-1-P) into 2,3-diketo-5-methylthiopentyl-1-phosphate (DK-MTP-1-P). The polypeptide is Methylthioribulose-1-phosphate dehydratase (Xanthomonas campestris pv. campestris (strain B100)).